An 88-amino-acid polypeptide reads, in one-letter code: MKCKRLNEVLELLQSYWSKDSDLSLMEILQKIANESGFQKPLNELTDEVIIYQLKMDGTDKYEPIPGLKKDYEEDFKTALLRARGIIK.

The protein to E.coli YihD.

This is an uncharacterized protein from Haemophilus influenzae (strain ATCC 51907 / DSM 11121 / KW20 / Rd).